The primary structure comprises 450 residues: Protein tweety homolog 1 (450 aa).

Topologically, residues 1-43 (MGAPPGYRPSAWVHLLHQLPRADFQLRPVPSAFAPQEREYQQA) are extracellular. A helical membrane pass occupies residues 44–64 (LLLVAALAGLGLGLSLIFIAV). Over 65–88 (YLIRFCCCRPPEPPGAKSPPPGGG) the chain is Cytoplasmic. The chain crosses the membrane as a helical span at residues 89-109 (CVTWNCIAALLVGCAGIGVGF). The Extracellular segment spans residues 110 to 214 (YGNSETSDGV…DVSFVEEYRW (105 aa)). Residue Asn130 is glycosylated (N-linked (GlcNAc...) asparagine). A helical membrane pass occupies residues 215–235 (LAYVLLLLLELLVCLFTLLGL). Over 236-240 (ARQSK) the chain is Cytoplasmic. The chain crosses the membrane as a helical span at residues 241–261 (WLVIVMTVMSLLVLVLSWGSM). The Extracellular portion of the chain corresponds to 262–390 (GLEAATAVGL…LRGLCEDTLE (129 aa)). Cystine bridges form between Cys275/Cys385 and Cys303/Cys370. N-linked (GlcNAc...) asparagine glycosylation is found at Asn284 and Asn355. Residues 391-411 (GLLFLLLFSLLSAGALATVLC) traverse the membrane as a helical segment. Over 412-450 (SLPRAWALFPPSDDYEDTDDDDPFNPQESKRFVQWQSSI) the chain is Cytoplasmic. The tract at residues 427–450 (EDTDDDDPFNPQESKRFVQWQSSI) is disordered. Ser440 bears the Phosphoserine mark.

The protein belongs to the tweety family. Homotetramer; disulfide-linked. Homodimer. N-glycosylated. Contains high-mannose, hybrid and complex oligosaccharides.

Its subcellular location is the cell membrane. It catalyses the reaction chloride(in) = chloride(out). The catalysed reaction is L-glutamate(out) = L-glutamate(in). Its function is as follows. Calcium-independent, swelling-dependent volume-regulated anion channel (VRAC-swell) which plays a pivotal role in the process of regulatory volume decrease (RVD) in the brain through the efflux of anions like chloride and organic osmolytes like glutamate. This Bos taurus (Bovine) protein is Protein tweety homolog 1 (TTYH1).